A 220-amino-acid polypeptide reads, in one-letter code: GTP cyclohydrolase 1 (220 aa).

3 residues coordinate Zn(2+): Cys-109, His-112, and Cys-180.

Belongs to the GTP cyclohydrolase I family. In terms of assembly, toroid-shaped homodecamer, composed of two pentamers of five dimers.

It carries out the reaction GTP + H2O = 7,8-dihydroneopterin 3'-triphosphate + formate + H(+). Its pathway is cofactor biosynthesis; 7,8-dihydroneopterin triphosphate biosynthesis; 7,8-dihydroneopterin triphosphate from GTP: step 1/1. This is GTP cyclohydrolase 1 from Yersinia enterocolitica serotype O:8 / biotype 1B (strain NCTC 13174 / 8081).